The sequence spans 503 residues: Transcription termination/antitermination protein NusA (503 aa).

One can recognise an S1 motif domain in the interval 140–206 (GELVIGVVKR…RGPQLLVSRT (67 aa)). In terms of domain architecture, KH spans 308–374 (SHTMDIAVNK…FMEKLDVDEE (67 aa)).

Belongs to the NusA family. Monomer. Binds directly to the core enzyme of the DNA-dependent RNA polymerase and to nascent RNA.

Its subcellular location is the cytoplasm. In terms of biological role, participates in both transcription termination and antitermination. This is Transcription termination/antitermination protein NusA from Coxiella burnetii (strain RSA 493 / Nine Mile phase I).